The primary structure comprises 156 residues: Regulatory protein RecX (156 aa).

This sequence belongs to the RecX family.

Its subcellular location is the cytoplasm. Modulates RecA activity. The chain is Regulatory protein RecX from Pseudomonas putida (strain ATCC 47054 / DSM 6125 / CFBP 8728 / NCIMB 11950 / KT2440).